The following is a 457-amino-acid chain: UDP-N-acetylmuramate--L-alanine ligase (457 aa).

Residue 109–115 coordinates ATP; the sequence is GTDGKTT.

The protein belongs to the MurCDEF family.

It is found in the cytoplasm. The catalysed reaction is UDP-N-acetyl-alpha-D-muramate + L-alanine + ATP = UDP-N-acetyl-alpha-D-muramoyl-L-alanine + ADP + phosphate + H(+). It functions in the pathway cell wall biogenesis; peptidoglycan biosynthesis. In terms of biological role, cell wall formation. This is UDP-N-acetylmuramate--L-alanine ligase from Thermotoga neapolitana (strain ATCC 49049 / DSM 4359 / NBRC 107923 / NS-E).